Reading from the N-terminus, the 453-residue chain is Adenosylmethionine-8-amino-7-oxononanoate aminotransferase (453 aa).

118-119 is a pyridoxal 5'-phosphate binding site; the sequence is GA. Residue tyrosine 151 participates in substrate binding. Aspartate 257 serves as a coordination point for pyridoxal 5'-phosphate. Substrate contacts are provided by lysine 286, glycine 321, and arginine 416. The residue at position 286 (lysine 286) is an N6-(pyridoxal phosphate)lysine.

This sequence belongs to the class-III pyridoxal-phosphate-dependent aminotransferase family. BioA subfamily. In terms of assembly, homodimer. Pyridoxal 5'-phosphate serves as cofactor.

The protein resides in the cytoplasm. It catalyses the reaction (8S)-8-amino-7-oxononanoate + S-adenosyl-L-methionine = S-adenosyl-4-methylsulfanyl-2-oxobutanoate + (7R,8S)-7,8-diammoniononanoate. It participates in cofactor biosynthesis; biotin biosynthesis; 7,8-diaminononanoate from 8-amino-7-oxononanoate (SAM route): step 1/1. Its function is as follows. Catalyzes the transfer of the alpha-amino group from S-adenosyl-L-methionine (SAM) to 7-keto-8-aminopelargonic acid (KAPA) to form 7,8-diaminopelargonic acid (DAPA). It is the only aminotransferase known to utilize SAM as an amino donor. The protein is Adenosylmethionine-8-amino-7-oxononanoate aminotransferase of Aquifex aeolicus (strain VF5).